Reading from the N-terminus, the 317-residue chain is MKSSPNQLSIFSYLLGICSLDTLLSPVGRKMDAISPLVILRMDNHISSFFSEFQPNGQAPISSTDKQVTPQVSHDGQVLEFAPPRRLKTEEIPNIVDDFRIAARNAIEAGFDGVEIHGANGYLIDQFMKDSVNDRTDAYGGGIENRCRFAAEVITAVAGEIGAHRLGVRLSPFADYMDCHDSDPEVLALRVIGLMNNLGVLYCHMIEPRMCVGAGEDGSKPVIAHGRLLPFRKAFRGTFMVNGGYDRDEGDKAVADGYADLVAYGRLFLANPDLPERFRRKAGLNKYDRSTFYTSDPVVGYTDYPFLDDQNSELATR.

Residue 26 to 28 (PVG) participates in FMN binding. 117–120 (HGAN) provides a ligand contact to substrate. Tyr-122 acts as the Proton donor in catalysis. An FMN-binding site is contributed by Arg-169. Arg-209 lines the substrate pocket. Residues Gly-244 and 265-266 (GR) contribute to the FMN site.

Belongs to the NADH:flavin oxidoreductase/NADH oxidase family. FMN serves as cofactor.

Its function is as follows. Putative oxophytodienoate reductase that may be involved in the biosynthesis or metabolism of oxylipin signaling molecules. The chain is Putative 12-oxophytodienoate reductase 10 (OPR10) from Oryza sativa subsp. japonica (Rice).